A 423-amino-acid chain; its full sequence is CinA-like protein (423 aa).

This sequence belongs to the CinA family.

The polypeptide is CinA-like protein (Desulforapulum autotrophicum (strain ATCC 43914 / DSM 3382 / VKM B-1955 / HRM2) (Desulfobacterium autotrophicum)).